Consider the following 599-residue polypeptide: Putative ATP-dependent helicase YeeB (599 aa).

The 178-residue stretch at 30 to 207 folds into the Helicase ATP-binding domain; sequence AFEKRNSQYL…LLPEDEELFD (178 aa). Residue 43–50 coordinates ATP; that stretch reads APPASGKS. The short motif at 154 to 157 is the DEAH box element; it reads DEFH. The Helicase C-terminal domain maps to 236–408; it reads QYTSAINEVL…TVNTMLKAIS (173 aa).

The protein belongs to the helicase family.

The chain is Putative ATP-dependent helicase YeeB (yeeB) from Bacillus subtilis (strain 168).